The following is a 374-amino-acid chain: Beta sliding clamp (374 aa).

The protein belongs to the beta sliding clamp family. As to quaternary structure, forms a ring-shaped head-to-tail homodimer around DNA which binds and tethers DNA polymerases and other proteins to the DNA. The DNA replisome complex has a single clamp-loading complex (3 tau and 1 each of delta, delta', psi and chi subunits) which binds 3 Pol III cores (1 core on the leading strand and 2 on the lagging strand) each with a beta sliding clamp dimer. Additional proteins in the replisome are other copies of gamma, psi and chi, Ssb, DNA helicase and RNA primase.

The protein resides in the cytoplasm. In terms of biological role, confers DNA tethering and processivity to DNA polymerases and other proteins. Acts as a clamp, forming a ring around DNA (a reaction catalyzed by the clamp-loading complex) which diffuses in an ATP-independent manner freely and bidirectionally along dsDNA. Initially characterized for its ability to contact the catalytic subunit of DNA polymerase III (Pol III), a complex, multichain enzyme responsible for most of the replicative synthesis in bacteria; Pol III exhibits 3'-5' exonuclease proofreading activity. The beta chain is required for initiation of replication as well as for processivity of DNA replication. The protein is Beta sliding clamp (dnaN) of Helicobacter pylori (strain ATCC 700392 / 26695) (Campylobacter pylori).